Consider the following 356-residue polypeptide: Peptide chain release factor 1 (356 aa).

Q234 carries the N5-methylglutamine modification.

This sequence belongs to the prokaryotic/mitochondrial release factor family. Methylated by PrmC. Methylation increases the termination efficiency of RF1.

It is found in the cytoplasm. In terms of biological role, peptide chain release factor 1 directs the termination of translation in response to the peptide chain termination codons UAG and UAA. This is Peptide chain release factor 1 from Exiguobacterium sp. (strain ATCC BAA-1283 / AT1b).